The primary structure comprises 975 residues: E3 ubiquitin-protein ligase BRE1A (975 aa).

Positions 1 to 37 are disordered; sequence MSGIGSKRAAGEPGTSVPPEKKTAVEDSGTTVETIKL. Lys21 carries the N6-acetyllysine modification. A Phosphoserine modification is found at Ser41. The stretch at 43–90 forms a coiled coil; that stretch reads TEELDIRTLQTKNRKLAEMLDQRQAIEDELREHIEKLERRQATDDASL. Positions 125-155 are disordered; sequence KALVVPEPEPDSDSNQERKDDRERGEGQEPA. Phosphoserine is present on residues Ser136 and Ser138. Basic and acidic residues predominate over residues 139 to 151; that stretch reads NQERKDDRERGEG. Coiled-coil stretches lie at residues 168–375 and 429–898; these read EEME…EEVV and SLHK…TTKK. Lys348 and Lys510 each carry N6-acetyllysine. The disordered stretch occupies residues 507-622; that stretch reads DLNKTRLRSG…GKHDDGRKKE (116 aa). A Phosphoserine modification is found at Ser522. Positions 527 to 540 are enriched in basic and acidic residues; sequence EDPKDEPAELKQDS. Positions 543–552 are enriched in polar residues; that stretch reads LATQSAASKA. A compositionally biased stretch (basic and acidic residues) spans 558-622; sequence NEIKSKRDEE…GKHDDGRKKE (65 aa). Ser562 bears the Phosphoserine mark. The segment at 922–961 adopts an RING-type zinc-finger fold; that stretch reads CPCCNMRKKDAVLTKCFHVFCFECVKTRYDTRQRKCPKCN.

The protein belongs to the BRE1 family. Component of the RNF20/40 complex (also known as BRE1 complex) probably composed of 2 copies of RNF20/BRE1A and 2 copies of RNF40/BRE1B. Interacts with UBE2E1/UBCH6. Interacts with p53/TP53 and WAC. Interacts with PAF1; the interaction mediates the association of the PAF1 and RNF20/40 complexes which is a prerequsite for recruitment of UBE2A/B. Interacts with PA2G4. Interacts with FBXL19.

The protein resides in the nucleus. The enzyme catalyses S-ubiquitinyl-[E2 ubiquitin-conjugating enzyme]-L-cysteine + [acceptor protein]-L-lysine = [E2 ubiquitin-conjugating enzyme]-L-cysteine + N(6)-ubiquitinyl-[acceptor protein]-L-lysine.. It participates in protein modification; protein ubiquitination. Its function is as follows. Component of the RNF20/40 E3 ubiquitin-protein ligase complex that mediates monoubiquitination of 'Lys-120' of histone H2B (H2BK120ub1). H2BK120ub1 gives a specific tag for epigenetic transcriptional activation and is also prerequisite for histone H3 'Lys-4' and 'Lys-79' methylation (H3K4me and H3K79me, respectively). It thereby plays a central role in histone code and gene regulation. The RNF20/40 complex forms a H2B ubiquitin ligase complex in cooperation with the E2 enzyme UBE2A or UBE2B; reports about the cooperation with UBE2E1/UBCH are contradictory. Required for transcriptional activation of Hox genes. Recruited to the MDM2 promoter, probably by being recruited by p53/TP53, and thereby acts as a transcriptional coactivator. Mediates the polyubiquitination of PA2G4 leading to its proteasome-mediated degradation. The polypeptide is E3 ubiquitin-protein ligase BRE1A (RNF20) (Bos taurus (Bovine)).